Here is an 82-residue protein sequence, read N- to C-terminus: Small ribosomal subunit protein uS17c (82 aa).

This sequence belongs to the universal ribosomal protein uS17 family. Part of the 30S ribosomal subunit.

It localises to the plastid. The protein localises to the chloroplast. Functionally, one of the primary rRNA binding proteins, it binds specifically to the 5'-end of 16S ribosomal RNA. The protein is Small ribosomal subunit protein uS17c (rps17) of Emiliania huxleyi (Coccolithophore).